Reading from the N-terminus, the 98-residue chain is Co-chaperonin GroES (98 aa).

It belongs to the GroES chaperonin family. Heptamer of 7 subunits arranged in a ring. Interacts with the chaperonin GroEL.

Its subcellular location is the cytoplasm. Together with the chaperonin GroEL, plays an essential role in assisting protein folding. The GroEL-GroES system forms a nano-cage that allows encapsulation of the non-native substrate proteins and provides a physical environment optimized to promote and accelerate protein folding. GroES binds to the apical surface of the GroEL ring, thereby capping the opening of the GroEL channel. This chain is Co-chaperonin GroES, found in Beutenbergia cavernae (strain ATCC BAA-8 / DSM 12333 / CCUG 43141 / JCM 11478 / NBRC 16432 / NCIMB 13614 / HKI 0122).